The primary structure comprises 302 residues: Succinate--CoA ligase [ADP-forming] subunit alpha (302 aa).

CoA is bound by residues Thr17–Thr20, Lys43, and Ile96–Glu98. Tyr159 provides a ligand contact to substrate. His247 functions as the Tele-phosphohistidine intermediate in the catalytic mechanism.

The protein belongs to the succinate/malate CoA ligase alpha subunit family. As to quaternary structure, heterotetramer of two alpha and two beta subunits.

It carries out the reaction succinate + ATP + CoA = succinyl-CoA + ADP + phosphate. The catalysed reaction is GTP + succinate + CoA = succinyl-CoA + GDP + phosphate. It functions in the pathway carbohydrate metabolism; tricarboxylic acid cycle; succinate from succinyl-CoA (ligase route): step 1/1. Functionally, succinyl-CoA synthetase functions in the citric acid cycle (TCA), coupling the hydrolysis of succinyl-CoA to the synthesis of either ATP or GTP and thus represents the only step of substrate-level phosphorylation in the TCA. The alpha subunit of the enzyme binds the substrates coenzyme A and phosphate, while succinate binding and nucleotide specificity is provided by the beta subunit. This is Succinate--CoA ligase [ADP-forming] subunit alpha from Staphylococcus aureus (strain COL).